Consider the following 527-residue polypeptide: Bifunctional pantoate ligase/cytidylate kinase (527 aa).

The interval 1–277 (MRQLISPEAL…VGTARLIDNL (277 aa)) is pantoate--beta-alanine ligase. 27-34 (MGALHAGH) serves as a coordination point for ATP. Residue His-34 is the Proton donor of the active site. A (R)-pantoate-binding site is contributed by Gln-58. Gln-58 contacts beta-alanine. 147–150 (GEKD) is a binding site for ATP. Position 153 (Gln-153) interacts with (R)-pantoate. ATP-binding positions include Val-176 and 184–187 (LSSR). Positions 278–527 (TLQGRRPIIA…GQTPSPLSLG (250 aa)) are cytidylate kinase. The interval 507-527 (GLGDSSPQATPGQTPSPLSLG) is disordered. Over residues 511–527 (SSPQATPGQTPSPLSLG) the composition is skewed to polar residues.

This sequence in the N-terminal section; belongs to the pantothenate synthetase family. In the C-terminal section; belongs to the cytidylate kinase family. Type 1 subfamily.

The protein localises to the cytoplasm. The catalysed reaction is (R)-pantoate + beta-alanine + ATP = (R)-pantothenate + AMP + diphosphate + H(+). The enzyme catalyses CMP + ATP = CDP + ADP. It carries out the reaction dCMP + ATP = dCDP + ADP. Its pathway is cofactor biosynthesis; (R)-pantothenate biosynthesis; (R)-pantothenate from (R)-pantoate and beta-alanine: step 1/1. In terms of biological role, catalyzes the condensation of pantoate with beta-alanine in an ATP-dependent reaction via a pantoyl-adenylate intermediate. Catalyzes the transfer of a phosphate group from ATP to either CMP or dCMP to form CDP or dCDP and ADP, respectively. The polypeptide is Bifunctional pantoate ligase/cytidylate kinase (Synechococcus elongatus (strain ATCC 33912 / PCC 7942 / FACHB-805) (Anacystis nidulans R2)).